A 100-amino-acid chain; its full sequence is Aspartyl/glutamyl-tRNA(Asn/Gln) amidotransferase subunit C (100 aa).

This sequence belongs to the GatC family. As to quaternary structure, heterotrimer of A, B and C subunits.

It carries out the reaction L-glutamyl-tRNA(Gln) + L-glutamine + ATP + H2O = L-glutaminyl-tRNA(Gln) + L-glutamate + ADP + phosphate + H(+). The enzyme catalyses L-aspartyl-tRNA(Asn) + L-glutamine + ATP + H2O = L-asparaginyl-tRNA(Asn) + L-glutamate + ADP + phosphate + 2 H(+). Allows the formation of correctly charged Asn-tRNA(Asn) or Gln-tRNA(Gln) through the transamidation of misacylated Asp-tRNA(Asn) or Glu-tRNA(Gln) in organisms which lack either or both of asparaginyl-tRNA or glutaminyl-tRNA synthetases. The reaction takes place in the presence of glutamine and ATP through an activated phospho-Asp-tRNA(Asn) or phospho-Glu-tRNA(Gln). This chain is Aspartyl/glutamyl-tRNA(Asn/Gln) amidotransferase subunit C, found in Streptococcus sanguinis (strain SK36).